A 362-amino-acid polypeptide reads, in one-letter code: Tyrosine recombinase XerH (362 aa).

A Core-binding (CB) domain is found at 43–140 (ECLNELNQAC…ALLGLFSYID (98 aa)). One can recognise a Tyr recombinase domain in the interval 170-357 (KLPTHLNNEE…DKQRLEEAAS (188 aa)). Catalysis depends on residues arginine 213, lysine 239, histidine 309, arginine 312, and histidine 335. The O-(3'-phospho-DNA)-tyrosine intermediate role is filled by tyrosine 344.

Belongs to the 'phage' integrase family. XerH subfamily.

The protein resides in the cytoplasm. FtsK is required for recombination. In terms of biological role, site-specific tyrosine recombinase, which acts by catalyzing the cutting and rejoining of the recombining DNA molecules. Involved in chromosome segregation. May contribute to chromosome decatenation. The sequence is that of Tyrosine recombinase XerH from Helicobacter pylori (strain ATCC 700392 / 26695) (Campylobacter pylori).